Reading from the N-terminus, the 275-residue chain is ATP synthase subunit delta (275 aa).

The protein belongs to the ATPase delta chain family. F-type ATPases have 2 components, F(1) - the catalytic core - and F(0) - the membrane proton channel. F(1) has five subunits: alpha(3), beta(3), gamma(1), delta(1), epsilon(1). F(0) has three main subunits: a(1), b(2) and c(10-14). The alpha and beta chains form an alternating ring which encloses part of the gamma chain. F(1) is attached to F(0) by a central stalk formed by the gamma and epsilon chains, while a peripheral stalk is formed by the delta and b chains.

The protein resides in the cell membrane. In terms of biological role, f(1)F(0) ATP synthase produces ATP from ADP in the presence of a proton or sodium gradient. F-type ATPases consist of two structural domains, F(1) containing the extramembraneous catalytic core and F(0) containing the membrane proton channel, linked together by a central stalk and a peripheral stalk. During catalysis, ATP synthesis in the catalytic domain of F(1) is coupled via a rotary mechanism of the central stalk subunits to proton translocation. Functionally, this protein is part of the stalk that links CF(0) to CF(1). It either transmits conformational changes from CF(0) to CF(1) or is implicated in proton conduction. In Arthrobacter sp. (strain FB24), this protein is ATP synthase subunit delta.